The following is a 409-amino-acid chain: Aspartate aminotransferase, cytoplasmic (409 aa).

S2 bears the N-acetylserine mark. 3 residues coordinate L-aspartate: G38, W138, and N191. K255 carries the post-translational modification N6-(pyridoxal phosphate)lysine. L-aspartate is bound at residue R383. S385 is modified (phosphoserine).

Belongs to the class-I pyridoxal-phosphate-dependent aminotransferase family. In terms of assembly, homodimer. Pyridoxal 5'-phosphate is required as a cofactor.

Its subcellular location is the cytoplasm. It carries out the reaction L-aspartate + 2-oxoglutarate = oxaloacetate + L-glutamate. In terms of biological role, plays a key role in amino acid metabolism. The chain is Aspartate aminotransferase, cytoplasmic from Schizosaccharomyces pombe (strain 972 / ATCC 24843) (Fission yeast).